We begin with the raw amino-acid sequence, 123 residues long: uncharacterized protein (123 aa).

A signal peptide spans 1-19 (MKIKYFFIPLFSSAILFSA). Residue Cys20 is the site of N-palmitoyl cysteine attachment. A lipid anchor (S-diacylglycerol cysteine) is attached at Cys20.

It belongs to the MG439/MG440 family.

Its subcellular location is the cell membrane. This is an uncharacterized protein from Mycoplasma pneumoniae (strain ATCC 29342 / M129 / Subtype 1) (Mycoplasmoides pneumoniae).